We begin with the raw amino-acid sequence, 458 residues long: SLIT-ROBO Rho GTPase-activating protein 2B (458 aa).

The F-BAR domain occupies 22–324 (KEIRAQLTEQ…AVENLDATSD (303 aa)). Over residues 181 to 203 (LKEAEKQEEKQIGKSVKQEDRQT) the composition is skewed to basic and acidic residues. The interval 181-214 (LKEAEKQEEKQIGKSVKQEDRQTPRSPDSTANVR) is disordered. Residues 362–400 (QSELLQRCQQLQSRLSTLKIENEEVKKTMEATLQTIQDI) adopt a coiled-coil conformation.

As to quaternary structure, may interact with SRGAP2; formation of the heterodimer alters SRGAP2 function.

Its function is as follows. May regulate cell migration and differentiation through interaction with and inhibition of SRGAP2. In contrast to SRGAP2C, it is not able to induce long-lasting changes in synaptic density throughout adulthood. This is SLIT-ROBO Rho GTPase-activating protein 2B (SRGAP2B) from Homo sapiens (Human).